Reading from the N-terminus, the 243-residue chain is Voltage-gated monoatomic cation channel TMEM109 (243 aa).

The N-terminal stretch at 1 to 33 (MAASSISSPWGKHVFKAILMVLVALILLHSALA) is a signal peptide. At 34 to 83 (QSRRDFAPPGQQKREAPVDVLTQIGRSVRGTLDAWIGPETMHLVSESSSQ) the chain is on the lumenal side. A helical transmembrane segment spans residues 84–104 (VLWAISSAISVAFFALSGIAA). Topologically, residues 105–135 (QLLNALGLAGDYLAQGLKLSPGQVQTFLLWG) are cytoplasmic. Residues 136-156 (AGALVVYWLLSLLLGLVLALL) traverse the membrane as a helical segment. Residues 157–185 (GRILWGLKLVIFLAGFVALMRSVPDPSTR) are Lumenal-facing. Residues 186-205 (ALLLLALLILYALLSRLTGS) traverse the membrane as a helical segment. At 206–243 (RASGAQLEAKVRGLERQVEELRWRQRRAAKGARSVEEE) the chain is on the cytoplasmic side.

Homooligomer. Interacts with CRYAB; in the cellular response to DNA damage.

Its subcellular location is the nucleus outer membrane. The protein resides in the endoplasmic reticulum membrane. It is found in the sarcoplasmic reticulum membrane. It carries out the reaction K(+)(in) = K(+)(out). It catalyses the reaction Ca(2+)(in) = Ca(2+)(out). Functions as a voltage-gated monoatomic cation channel permeable to both potassium and calcium. Plays a role in the cellular response to DNA damage. The sequence is that of Voltage-gated monoatomic cation channel TMEM109 from Homo sapiens (Human).